The following is a 142-amino-acid chain: Large ribosomal subunit protein uL13 (142 aa).

The protein belongs to the universal ribosomal protein uL13 family. Part of the 50S ribosomal subunit.

In terms of biological role, this protein is one of the early assembly proteins of the 50S ribosomal subunit, although it is not seen to bind rRNA by itself. It is important during the early stages of 50S assembly. The sequence is that of Large ribosomal subunit protein uL13 from Cellvibrio japonicus (strain Ueda107) (Pseudomonas fluorescens subsp. cellulosa).